The following is a 596-amino-acid chain: MAVKGKVLRVRGPVVIAEDMQGVQMYEVVEVGKDGLVGEVTRITGDKAVIQVYEDTTGITPGEPVVGTGSPFSVELGPGLLSHIFDGILRPLESIHEVAKSPFIKRGIKVPSLDRSKKWEWRPNPELKPGDKVSGDDILGTVPETPLIEHKVMVPPNVVPVDKAATLKWLAPAGEYTIEDTIAVVEYEGKEIELKMYHRWPIRRPRPVKEKFEPVTPLITGVRVLDTLFPMAKGGTGAIPGPFGSGKTVTLRTLAAWSDAKVVIYVGCGERGNEMTDVLVNFPHYKDPWSGRPLMERTILVANTSNMPVAAREASIYVGVTLAEYYRDMGYDSLLIADSTSRWAEALRDIAGRMEEMPAEEGFPPYLASRLAEYYERAGRARIPGRPERVGSVTIASAVSPPGGDFSEPVTSHTRRFVRVFWALDASLAYARHYPAINWLVSYSLYVDTVAKWWHENISPKWKEYRDEMMSILLKEDELKEIVRLVGPESLSEPDKLIIETARIIKEAFLQQNAFDPIDAFCSPKKQFLMMKIIIDFYRKAKELVNAGVPVATIREAVKEEVAELIRSRFTVRNEELEKLEDLYARFMEKLSSLSP.

Position 241–248 (241–248 (GPFGSGKT)) interacts with ATP.

Belongs to the ATPase alpha/beta chains family. Has multiple subunits with at least A(3), B(3), C, D, E, F, H, I and proteolipid K(x).

Its subcellular location is the cell membrane. The enzyme catalyses ATP + H2O + 4 H(+)(in) = ADP + phosphate + 5 H(+)(out). Functionally, component of the A-type ATP synthase that produces ATP from ADP in the presence of a proton gradient across the membrane. The A chain is the catalytic subunit. The chain is A-type ATP synthase subunit A from Ignicoccus hospitalis (strain KIN4/I / DSM 18386 / JCM 14125).